The primary structure comprises 357 residues: MSGTVLIMAGGTGGHVFPALAVADQLRTRGFDILWLGAENGMEGNLVRQYGYEIAELSVSRLRGGGIKRKLTAPFNLLRAVLQARQLIRARQPVLAVGFGGFASGPGGLAARLCKVPVVVHEQNAVPGLTNRLLSRLSTVTLEGFQGAFGHPQACWVGNPVRPQITALEEPARRYAQHQGGLRVLVLGGSQGALVLNQDLPELLLAVLGRDIQVRHQCGAGRTAEAAPIYQALGLQAQVSEFIDDMAEAYGWADLVICRAGALTVAEVAAAGVAALFVPLPSAVDDHQTLNARWLSERGAALLLPQRDLGAVSLAGTLKPVAERGLLAQIAERAREQAMADSAERAATLCEEVANGR.

UDP-N-acetyl-alpha-D-glucosamine-binding positions include 12 to 14, N124, R162, S190, I243, 262 to 267, and Q288; these read TGG and ALTVAE.

The protein belongs to the glycosyltransferase 28 family. MurG subfamily.

It is found in the cell inner membrane. The enzyme catalyses di-trans,octa-cis-undecaprenyl diphospho-N-acetyl-alpha-D-muramoyl-L-alanyl-D-glutamyl-meso-2,6-diaminopimeloyl-D-alanyl-D-alanine + UDP-N-acetyl-alpha-D-glucosamine = di-trans,octa-cis-undecaprenyl diphospho-[N-acetyl-alpha-D-glucosaminyl-(1-&gt;4)]-N-acetyl-alpha-D-muramoyl-L-alanyl-D-glutamyl-meso-2,6-diaminopimeloyl-D-alanyl-D-alanine + UDP + H(+). The protein operates within cell wall biogenesis; peptidoglycan biosynthesis. Its function is as follows. Cell wall formation. Catalyzes the transfer of a GlcNAc subunit on undecaprenyl-pyrophosphoryl-MurNAc-pentapeptide (lipid intermediate I) to form undecaprenyl-pyrophosphoryl-MurNAc-(pentapeptide)GlcNAc (lipid intermediate II). In Alcanivorax borkumensis (strain ATCC 700651 / DSM 11573 / NCIMB 13689 / SK2), this protein is UDP-N-acetylglucosamine--N-acetylmuramyl-(pentapeptide) pyrophosphoryl-undecaprenol N-acetylglucosamine transferase.